The following is a 292-amino-acid chain: Aquaporin PIP1-3/PIP1-4 (292 aa).

Residues 1–42 (MEGKEEDVRLGANKFSERQPIGTAAQGAGAGDDDKDYKEPPP) form a disordered region. The next 2 membrane-spanning stretches (helical) occupy residues 61–81 (IAEF…VMGV) and 96–118 (IAWS…SGGH). The NPA 1 motif lies at 120–122 (NPA). The next 3 membrane-spanning stretches (helical) occupy residues 139 to 159 (IFYI…VKGF), 181 to 201 (GDGL…VFSA), and 215 to 235 (ILAP…TIPI). Residues 241–243 (NPA) carry the NPA 2 motif. The chain crosses the membrane as a helical span at residues 263 to 283 (IFWVGPFIGAALAAIYHQVII).

It belongs to the MIP/aquaporin (TC 1.A.8) family. PIP (TC 1.A.8.11) subfamily.

The protein localises to the cell membrane. Aquaporins facilitate the transport of water and small neutral solutes across cell membranes. This is Aquaporin PIP1-3/PIP1-4 (PIP1-3) from Zea mays (Maize).